We begin with the raw amino-acid sequence, 202 residues long: Large ribosomal subunit protein bL25 (202 aa).

This sequence belongs to the bacterial ribosomal protein bL25 family. CTC subfamily. Part of the 50S ribosomal subunit; part of the 5S rRNA/L5/L18/L25 subcomplex. Contacts the 5S rRNA. Binds to the 5S rRNA independently of L5 and L18.

Its function is as follows. This is one of the proteins that binds to the 5S RNA in the ribosome where it forms part of the central protuberance. This is Large ribosomal subunit protein bL25 from Burkholderia ambifaria (strain MC40-6).